We begin with the raw amino-acid sequence, 30 residues long: GWKDWLNKAKDFIKEKGPEILRAAANAAIN.

Belongs to the ponericin-G family. In terms of tissue distribution, expressed by the venom gland.

It is found in the secreted. The protein resides in the target cell membrane. In terms of biological role, membrane-perturbating peptide with multiple activities. It is insecticidal, since it induces contractile paralysis in insects (L.cuprina) during several hours and death after 24 hours. It shows a relatively strong and broad-spectrum antibacterial activity against both Gram-positive and Gram-negative bacteria (MIC&lt;20 uM). It is also antiparasitic, since it potently inhibits the larval development of the major pathogenic nematode of ruminants (H.contortus, IC(50)=5.6 uM) and reduces the motility of adult males of the other nematode B.malayi. It also shows cytotoxic activity against HEK293 cells (EC(50)=5-7 uM) but does not induce hemolysis in human erythrocytes. In addition, it causes a moderate increase in intracellular calcium concentration on neuronal and epithelial cell lines, which supports a non-specific membrane perturbation mechanism of action. In vivo, it induces pain by intraplantar injection into mice, suggesting a defensive function against vertebrate predators. The protein is M-poneritoxin-Nc3a of Neoponera commutata (Large hunting ant).